We begin with the raw amino-acid sequence, 259 residues long: Light-harvesting complex stress-related protein 3.1, chloroplastic (259 aa).

Residues 1 to 45 (MLANVVSRKASGLRQTPARATVAVKSVSGRRTTAAEPQTAAPVAA) constitute a chloroplast transit peptide. Tyr51 provides a ligand contact to chlorophyll b. Residues Phe66, Glu87, and His90 each coordinate chlorophyll a. Arg92 contacts chlorophyll b. The helical transmembrane segment at 93-113 (VAMLAALGFVVGEQLQDFPLF) threads the bilayer. Gln130 contacts chlorophyll a. The chain crosses the membrane as a helical span at residues 137-157 (EPLLIAIGVAESYRVAVGWAT). Chlorophyll b-binding residues include Glu147 and Arg150. Chlorophyll a contacts are provided by Lys196, Glu197, Asn200, Arg202, and Gln214. The chain crosses the membrane as a helical span at residues 203-223 (LAMIAIAAFVAQELVEQTEIF).

This sequence belongs to the light-harvesting chlorophyll a/b-binding (LHC) protein family. In terms of assembly, interacts with the photosystem II-light-harvesting complex II (PSII-LHCII) supercomplex to form PSII-LHCII-LHCSR3 supercomplex.

Its subcellular location is the plastid. The protein resides in the chloroplast thylakoid membrane. Required for non-photochemical quenching (NPQ), a mechanism that converts and dissipates the harmful excess absorbed light energy into heat and protect the photosynthetic apparatus from photo-oxidative damage. NPQ includes dissipating excess light energy to heat (qE) and the reversible coupling of LHCII to photosystems (state transitions or qT), which are considered separate NPQ mechanisms. Is responsible for most of the excess light energy to heat dissipation (qE), also known as energy-dependent chlorophyll fluorescence quenching activity of chlorophyll excited states. Involved in a de-coupling and re-coupling of energy transfer to photosystem II (PSII) during qT. Binds chlorophyll a and b. Is able to sense luminal acidification of the thylakoid membranes, which occurs along with elevated electron flow caused by excess light. Establishes interactions with photosystem II (PSII) antenna components upon lumen acidification, and protonation of lumen-exposed, negatively charged residues both in LHCSR3 and in PSII antenna components. Mediates excitation energy transfer from light-harvesting complex II (LHCII) to photosystem I (PSI), rather than photosystem II (PSII), at low pH, which mimics the acidified lumen of the thylakoid membranes in high light-exposed chloroplasts. Activates PSI-dependent fluorescence quenching in addition to dissipating excitation energy in LHCII to avoid photooxidative stress under excess light. Contributes with PGRL1 to the regulation of electron flow upstream of photosystem I (PSI), and limits the accumulation of electrons on the PSI acceptor side, thus avoiding PSI photoinhibition. This is Light-harvesting complex stress-related protein 3.1, chloroplastic from Chlamydomonas reinhardtii (Chlamydomonas smithii).